A 466-amino-acid polypeptide reads, in one-letter code: Membrane-bound lytic murein transglycosylase F (466 aa).

A signal peptide spans M1 to T24. A non-LT domain region spans residues T25–V268. Positions G269–D466 are LT domain. E313 is an active-site residue.

The protein in the N-terminal section; belongs to the bacterial solute-binding protein 3 family. It in the C-terminal section; belongs to the transglycosylase Slt family.

Its subcellular location is the cell outer membrane. It catalyses the reaction Exolytic cleavage of the (1-&gt;4)-beta-glycosidic linkage between N-acetylmuramic acid (MurNAc) and N-acetylglucosamine (GlcNAc) residues in peptidoglycan, from either the reducing or the non-reducing ends of the peptidoglycan chains, with concomitant formation of a 1,6-anhydrobond in the MurNAc residue.. Its function is as follows. Murein-degrading enzyme that degrades murein glycan strands and insoluble, high-molecular weight murein sacculi, with the concomitant formation of a 1,6-anhydromuramoyl product. Lytic transglycosylases (LTs) play an integral role in the metabolism of the peptidoglycan (PG) sacculus. Their lytic action creates space within the PG sacculus to allow for its expansion as well as for the insertion of various structures such as secretion systems and flagella. In Sodalis glossinidius (strain morsitans), this protein is Membrane-bound lytic murein transglycosylase F.